The chain runs to 313 residues: Protein FixB (313 aa).

Position 255–283 (255–283) interacts with FAD; that stretch reads LYLAVGISGQIQHMVGANASQTIFAINKD.

Belongs to the ETF alpha-subunit/FixB family. Heterodimer of FixA and FixB.

It participates in amine and polyamine metabolism; carnitine metabolism. In terms of biological role, required for anaerobic carnitine reduction. May bring reductant to CaiA. The sequence is that of Protein FixB from Escherichia coli O17:K52:H18 (strain UMN026 / ExPEC).